A 220-amino-acid polypeptide reads, in one-letter code: ATP-dependent dethiobiotin synthetase BioD (220 aa).

Position 12-17 (12-17 (DVGKTI)) interacts with ATP. T16 lines the Mg(2+) pocket. K37 is an active-site residue. T41 is a binding site for substrate. ATP-binding positions include D49, 107 to 110 (EGAG), 167 to 168 (GS), and 197 to 199 (PAG). Positions 49 and 107 each coordinate Mg(2+).

This sequence belongs to the dethiobiotin synthetase family. As to quaternary structure, homodimer. The cofactor is Mg(2+).

It localises to the cytoplasm. The catalysed reaction is (7R,8S)-7,8-diammoniononanoate + CO2 + ATP = (4R,5S)-dethiobiotin + ADP + phosphate + 3 H(+). It participates in cofactor biosynthesis; biotin biosynthesis; biotin from 7,8-diaminononanoate: step 1/2. Its function is as follows. Catalyzes a mechanistically unusual reaction, the ATP-dependent insertion of CO2 between the N7 and N8 nitrogen atoms of 7,8-diaminopelargonic acid (DAPA, also called 7,8-diammoniononanoate) to form a ureido ring. The protein is ATP-dependent dethiobiotin synthetase BioD of Corynebacterium efficiens (strain DSM 44549 / YS-314 / AJ 12310 / JCM 11189 / NBRC 100395).